The following is a 206-amino-acid chain: UPF0328 protein ECU01_0050/ECU01_1560 (206 aa).

2 disordered regions span residues 1-153 and 179-206; these read MPRP…HSHT and GRLH…LATL. Positions 74–96 are enriched in basic and acidic residues; it reads HTEGCHTHEANPEPNTKHTETES. 2 stretches are compositionally biased toward polar residues: residues 97–120 and 132–148; these read PKPQ…SQNT and SRPS…QSPH.

It belongs to the UPF0328 family.

This chain is UPF0328 protein ECU01_0050/ECU01_1560, found in Encephalitozoon cuniculi (strain GB-M1) (Microsporidian parasite).